A 122-amino-acid polypeptide reads, in one-letter code: Large ribosomal subunit protein eL8 (122 aa).

It belongs to the eukaryotic ribosomal protein eL8 family. As to quaternary structure, part of the 50S ribosomal subunit. Probably part of the RNase P complex.

It localises to the cytoplasm. In terms of biological role, multifunctional RNA-binding protein that recognizes the K-turn motif in ribosomal RNA, the RNA component of RNase P, box H/ACA, box C/D and box C'/D' sRNAs. The protein is Large ribosomal subunit protein eL8 of Methanothrix thermoacetophila (strain DSM 6194 / JCM 14653 / NBRC 101360 / PT) (Methanosaeta thermophila).